Here is a 210-residue protein sequence, read N- to C-terminus: Orotate phosphoribosyltransferase (210 aa).

Residues R94, K98, H100, and 120 to 128 (EDLISTGGS) each bind 5-phospho-alpha-D-ribose 1-diphosphate. S124 serves as a coordination point for orotate.

Belongs to the purine/pyrimidine phosphoribosyltransferase family. PyrE subfamily. As to quaternary structure, homodimer. It depends on Mg(2+) as a cofactor.

It catalyses the reaction orotidine 5'-phosphate + diphosphate = orotate + 5-phospho-alpha-D-ribose 1-diphosphate. Its pathway is pyrimidine metabolism; UMP biosynthesis via de novo pathway; UMP from orotate: step 1/2. Its function is as follows. Catalyzes the transfer of a ribosyl phosphate group from 5-phosphoribose 1-diphosphate to orotate, leading to the formation of orotidine monophosphate (OMP). This is Orotate phosphoribosyltransferase from Bacillus anthracis (strain A0248).